A 206-amino-acid polypeptide reads, in one-letter code: Bis(5'-adenosyl)-triphosphatase (206 aa).

One can recognise an HIT domain in the interval 3–115 (KPIYFSKFLV…KINNVGDLIY (113 aa)). The short motif at 96–100 (HLHTH) is the Histidine triad motif element. His-98 (tele-AMP-histidine intermediate) is an active-site residue. The interval 143–164 (RQARKNNSTSATVDGDELSQGP) is disordered.

Homodimer. Mn(2+) is required as a cofactor.

It localises to the cytoplasm. The protein localises to the nucleus. It is found in the mitochondrion. It carries out the reaction P(1),P(3)-bis(5'-adenosyl) triphosphate + H2O = AMP + ADP + 2 H(+). In terms of biological role, cleaves A-5'-PPP-5'A to yield AMP and ADP. Can cleave all dinucleoside polyphosphates, provided the phosphate chain contains at least 3 phosphates and that 1 of the 2 bases composing the nucleotide is a purine. Is most effective on dinucleoside triphosphates. Negatively regulates intracellular dinucleoside polyphosphate levels, which elevate following heat shock. The sequence is that of Bis(5'-adenosyl)-triphosphatase (HNT2) from Saccharomyces cerevisiae (strain RM11-1a) (Baker's yeast).